The sequence spans 600 residues: Elongation factor 4 (600 aa).

Residues 5–187 form the tr-type G domain; sequence KYIRNFSIIA…AIINKLPSPK (183 aa). Residues 17-22 and 134-137 contribute to the GTP site; these read DHGKST and NKID.

Belongs to the TRAFAC class translation factor GTPase superfamily. Classic translation factor GTPase family. LepA subfamily.

Its subcellular location is the cell inner membrane. It carries out the reaction GTP + H2O = GDP + phosphate + H(+). In terms of biological role, required for accurate and efficient protein synthesis under certain stress conditions. May act as a fidelity factor of the translation reaction, by catalyzing a one-codon backward translocation of tRNAs on improperly translocated ribosomes. Back-translocation proceeds from a post-translocation (POST) complex to a pre-translocation (PRE) complex, thus giving elongation factor G a second chance to translocate the tRNAs correctly. Binds to ribosomes in a GTP-dependent manner. The protein is Elongation factor 4 of Rickettsia typhi (strain ATCC VR-144 / Wilmington).